A 250-amino-acid polypeptide reads, in one-letter code: Coproheme decarboxylase (250 aa).

Residues Arg131, 145–149, His172, and Gln185 each bind Fe-coproporphyrin III; that span reads YPMNK. The active site involves Tyr145.

The protein belongs to the ChdC family. Type 1 subfamily. Fe-coproporphyrin III serves as cofactor.

The enzyme catalyses Fe-coproporphyrin III + 2 H2O2 + 2 H(+) = heme b + 2 CO2 + 4 H2O. It carries out the reaction Fe-coproporphyrin III + H2O2 + H(+) = harderoheme III + CO2 + 2 H2O. It catalyses the reaction harderoheme III + H2O2 + H(+) = heme b + CO2 + 2 H2O. The protein operates within porphyrin-containing compound metabolism; protoheme biosynthesis. In terms of biological role, involved in coproporphyrin-dependent heme b biosynthesis. Catalyzes the decarboxylation of Fe-coproporphyrin III (coproheme) to heme b (protoheme IX), the last step of the pathway. The reaction occurs in a stepwise manner with a three-propionate intermediate. The polypeptide is Coproheme decarboxylase (Staphylococcus aureus (strain USA300 / TCH1516)).